The following is a 367-amino-acid chain: Probable peptidoglycan glycosyltransferase FtsW (367 aa).

Topologically, residues 1 to 8 (MRRVEGYD) are cytoplasmic. The helical transmembrane segment at 9–29 (MIVLMMAVILTCFGVVMVYSA) threads the bilayer. The Periplasmic segment spans residues 30 to 49 (SSVMAAKKFHDGFFFLKRQS). Residues 50-70 (LYALIGFIGMGVAMHVDYHVW) form a helical membrane-spanning segment. The Cytoplasmic portion of the chain corresponds to 71 to 72 (KK). A helical transmembrane segment spans residues 73 to 93 (WAVPLFLGTFFLLLLVFVPGI). Topologically, residues 94–138 (GGTAKGASRWIRLPGFNFQPSELAKVALIMYMAYSLEKRQDKLKQ) are periplasmic. A helical transmembrane segment spans residues 139-159 (FMSGFFPYMLILGVFIAVLLA). Residues 160–161 (QH) are Cytoplasmic-facing. The chain crosses the membrane as a helical span at residues 162–182 (DMGAALTMLAVAIVMLFAAGT). A topological domain (periplasmic) is located at residue Lys-183. A helical transmembrane segment spans residues 184-204 (VQYILGMGLVALPGICYLVFT). Topologically, residues 205-225 (KAYRMRRITAFLDPWQDPTDA) are cytoplasmic. Residues 226–246 (GFQIIQSWLALGTGGFFGQGL) form a helical membrane-spanning segment. Residues 247–266 (GEGKQKLFYLPEAHTDFILS) are Periplasmic-facing. The chain crosses the membrane as a helical span at residues 267–287 (VLGEEMGFIGVVVIASMFLLL). At 288-304 (VQRSIRVAIAAEDSFGR) the chain is on the cytoplasmic side. The chain crosses the membrane as a helical span at residues 305–325 (FLAFGIAILLGLEAFVNMAVV). At 326 to 335 (TGLLPTKGIA) the chain is on the periplasmic side. The helical transmembrane segment at 336 to 356 (LPFLSYGGSSLIISLCSVGVL) threads the bilayer. Residues 357–367 (LNVSTRMRGAA) lie on the Cytoplasmic side of the membrane.

The protein belongs to the SEDS family. FtsW subfamily.

The protein resides in the cell inner membrane. The enzyme catalyses [GlcNAc-(1-&gt;4)-Mur2Ac(oyl-L-Ala-gamma-D-Glu-L-Lys-D-Ala-D-Ala)](n)-di-trans,octa-cis-undecaprenyl diphosphate + beta-D-GlcNAc-(1-&gt;4)-Mur2Ac(oyl-L-Ala-gamma-D-Glu-L-Lys-D-Ala-D-Ala)-di-trans,octa-cis-undecaprenyl diphosphate = [GlcNAc-(1-&gt;4)-Mur2Ac(oyl-L-Ala-gamma-D-Glu-L-Lys-D-Ala-D-Ala)](n+1)-di-trans,octa-cis-undecaprenyl diphosphate + di-trans,octa-cis-undecaprenyl diphosphate + H(+). It participates in cell wall biogenesis; peptidoglycan biosynthesis. Its function is as follows. Peptidoglycan polymerase that is essential for cell division. This is Probable peptidoglycan glycosyltransferase FtsW from Geobacter sp. (strain M18).